Consider the following 671-residue polypeptide: UvrABC system protein B (671 aa).

A Helicase ATP-binding domain is found at 25 to 412; sequence EGIDAGLAHQ…AGRVVEQVVR (388 aa). 38-45 is an ATP binding site; sequence GVTGSGKT. The short motif at 91–114 is the Beta-hairpin element; that stretch reads YYDYYQPEAYVPSSDTFIEKDASI. A Helicase C-terminal domain is found at 429–595; the sequence is QVDDLLSEIH…GVFKDVADIM (167 aa). The segment at 600–624 is disordered; that stretch reads VPGSRSKKRKGMAKAAEENARYENE. The span at 614–624 shows a compositional bias: basic and acidic residues; the sequence is AAEENARYENE. The 36-residue stretch at 632–667 folds into the UVR domain; it reads NKRIRQLEEKMYQLARDLEFEAAAQMRDEIGKLRER.

Belongs to the UvrB family. In terms of assembly, forms a heterotetramer with UvrA during the search for lesions. Interacts with UvrC in an incision complex.

Its subcellular location is the cytoplasm. In terms of biological role, the UvrABC repair system catalyzes the recognition and processing of DNA lesions. A damage recognition complex composed of 2 UvrA and 2 UvrB subunits scans DNA for abnormalities. Upon binding of the UvrA(2)B(2) complex to a putative damaged site, the DNA wraps around one UvrB monomer. DNA wrap is dependent on ATP binding by UvrB and probably causes local melting of the DNA helix, facilitating insertion of UvrB beta-hairpin between the DNA strands. Then UvrB probes one DNA strand for the presence of a lesion. If a lesion is found the UvrA subunits dissociate and the UvrB-DNA preincision complex is formed. This complex is subsequently bound by UvrC and the second UvrB is released. If no lesion is found, the DNA wraps around the other UvrB subunit that will check the other stand for damage. In Pseudomonas savastanoi pv. phaseolicola (strain 1448A / Race 6) (Pseudomonas syringae pv. phaseolicola (strain 1448A / Race 6)), this protein is UvrABC system protein B.